The chain runs to 122 residues: Large ribosomal subunit protein uL14 (122 aa).

Belongs to the universal ribosomal protein uL14 family. In terms of assembly, part of the 50S ribosomal subunit. Forms a cluster with proteins L3 and L19. In the 70S ribosome, L14 and L19 interact and together make contacts with the 16S rRNA in bridges B5 and B8.

Binds to 23S rRNA. Forms part of two intersubunit bridges in the 70S ribosome. The polypeptide is Large ribosomal subunit protein uL14 (Baumannia cicadellinicola subsp. Homalodisca coagulata).